Here is a 333-residue protein sequence, read N- to C-terminus: Ketol-acid reductoisomerase (NADP(+)) (333 aa).

The KARI N-terminal Rossmann domain maps to 6 to 186 (TRVYTECDAD…GALRAGAIQT (181 aa)). NADP(+)-binding positions include 29–32 (YGSQ), K52, S55, S57, and 87–90 (DPAQ). The active site involves H112. G138 is a binding site for NADP(+). The 146-residue stretch at 187–332 (TFTEETETDL…ARLRALFSWS (146 aa)) folds into the KARI C-terminal knotted domain. Mg(2+) is bound by residues D195, E199, E231, and E235. S256 serves as a coordination point for substrate.

This sequence belongs to the ketol-acid reductoisomerase family. It depends on Mg(2+) as a cofactor.

The enzyme catalyses (2R)-2,3-dihydroxy-3-methylbutanoate + NADP(+) = (2S)-2-acetolactate + NADPH + H(+). It catalyses the reaction (2R,3R)-2,3-dihydroxy-3-methylpentanoate + NADP(+) = (S)-2-ethyl-2-hydroxy-3-oxobutanoate + NADPH + H(+). Its pathway is amino-acid biosynthesis; L-isoleucine biosynthesis; L-isoleucine from 2-oxobutanoate: step 2/4. It participates in amino-acid biosynthesis; L-valine biosynthesis; L-valine from pyruvate: step 2/4. Its function is as follows. Involved in the biosynthesis of branched-chain amino acids (BCAA). Catalyzes an alkyl-migration followed by a ketol-acid reduction of (S)-2-acetolactate (S2AL) to yield (R)-2,3-dihydroxy-isovalerate. In the isomerase reaction, S2AL is rearranged via a Mg-dependent methyl migration to produce 3-hydroxy-3-methyl-2-ketobutyrate (HMKB). In the reductase reaction, this 2-ketoacid undergoes a metal-dependent reduction by NADPH to yield (R)-2,3-dihydroxy-isovalerate. In Tropheryma whipplei (strain TW08/27) (Whipple's bacillus), this protein is Ketol-acid reductoisomerase (NADP(+)).